The sequence spans 156 residues: ATP synthase subunit b (156 aa).

Residues 11-31 traverse the membrane as a helical segment; sequence AIAFVLFVMFCMKFVWPPIMA.

Belongs to the ATPase B chain family. As to quaternary structure, F-type ATPases have 2 components, F(1) - the catalytic core - and F(0) - the membrane proton channel. F(1) has five subunits: alpha(3), beta(3), gamma(1), delta(1), epsilon(1). F(0) has three main subunits: a(1), b(2) and c(10-14). The alpha and beta chains form an alternating ring which encloses part of the gamma chain. F(1) is attached to F(0) by a central stalk formed by the gamma and epsilon chains, while a peripheral stalk is formed by the delta and b chains.

The protein resides in the cell inner membrane. Its function is as follows. F(1)F(0) ATP synthase produces ATP from ADP in the presence of a proton or sodium gradient. F-type ATPases consist of two structural domains, F(1) containing the extramembraneous catalytic core and F(0) containing the membrane proton channel, linked together by a central stalk and a peripheral stalk. During catalysis, ATP synthesis in the catalytic domain of F(1) is coupled via a rotary mechanism of the central stalk subunits to proton translocation. In terms of biological role, component of the F(0) channel, it forms part of the peripheral stalk, linking F(1) to F(0). In Photorhabdus laumondii subsp. laumondii (strain DSM 15139 / CIP 105565 / TT01) (Photorhabdus luminescens subsp. laumondii), this protein is ATP synthase subunit b.